Here is a 74-residue protein sequence, read N- to C-terminus: Peptide ToAP4 (74 aa).

Residues 1 to 22 (MQIKHLITLFFLVLIVADQCSA) form the signal peptide. Lysine 39 bears the Lysine amide mark. Residues 40 to 74 (GGRRKREIAAQIEQYRDLQKREAELEELLDRLPMF) constitute a propeptide that is removed on maturation.

This sequence belongs to the non-disulfide-bridged peptide (NDBP) superfamily. Short antimicrobial peptide (group 4) family. Expressed by the venom gland.

The protein resides in the secreted. Functionally, shows anti-inflammatory activities, since it decreases release of pro-inflammatory cytokines, and increases release of anti-inflammatory cytokines. Acts by blocking the Toll-like receptor 4 (TLR4). Also increases MHC-II expression in LPS-stimulated cells. Does not show antibacterial activity on Mycobacterium abscessus subsp. massiliense. Does not show antifungal activity. Has low hemolytic activity on human erythrocyte and low monocyte cytotoxicity. In vivo, does not induce immune cell migration. Helical wheel projections predict an amphipathic peptide with distinct hydrophobic and hydrophilic faces. The protein is Peptide ToAP4 of Tityus obscurus (Amazonian scorpion).